The sequence spans 506 residues: NAD(P)H-quinone oxidoreductase subunit 2 (506 aa).

13 helical membrane passes run 14-34, 42-62, 79-99, 108-128, 132-152, 167-187, 206-226, 240-260, 276-296, 302-322, 330-350, 374-394, and 409-429; these read AIIP…VDLA, WAPI…ALQW, LAIA…LISW, PIGE…LLCG, LISI…LSGY, LLVG…LYGL, FITS…IAAV, PTPV…AFAI, LLFT…ALAQ, MLAY…VSGT, VLYL…VILF, LGLS…GFFG, and LLVI…ISVI.

Belongs to the complex I subunit 2 family. As to quaternary structure, NDH-1 can be composed of about 15 different subunits; different subcomplexes with different compositions have been identified which probably have different functions.

It localises to the cellular thylakoid membrane. The enzyme catalyses a plastoquinone + NADH + (n+1) H(+)(in) = a plastoquinol + NAD(+) + n H(+)(out). The catalysed reaction is a plastoquinone + NADPH + (n+1) H(+)(in) = a plastoquinol + NADP(+) + n H(+)(out). In terms of biological role, NDH-1 shuttles electrons from an unknown electron donor, via FMN and iron-sulfur (Fe-S) centers, to quinones in the respiratory and/or the photosynthetic chain. The immediate electron acceptor for the enzyme in this species is believed to be plastoquinone. Couples the redox reaction to proton translocation, and thus conserves the redox energy in a proton gradient. Cyanobacterial NDH-1 also plays a role in inorganic carbon-concentration. The sequence is that of NAD(P)H-quinone oxidoreductase subunit 2 from Prochlorococcus marinus (strain MIT 9312).